Reading from the N-terminus, the 351-residue chain is D-alanine--D-alanine ligase (351 aa).

Residues 135-343 form the ATP-grasp domain; the sequence is NQIFLQSGQK…MEEVFADLIE (209 aa). 167–222 provides a ligand contact to ATP; that stretch reads LMSLGFPQFLKPVEGGSSVSTYKITNQEQLSRQLALIFESDSKVMSQSFLAGTEVS. 3 residues coordinate Mg(2+): aspartate 298, glutamate 310, and asparagine 312.

This sequence belongs to the D-alanine--D-alanine ligase family. The cofactor is Mg(2+). Mn(2+) serves as cofactor.

Its subcellular location is the cytoplasm. It carries out the reaction 2 D-alanine + ATP = D-alanyl-D-alanine + ADP + phosphate + H(+). Its pathway is cell wall biogenesis; peptidoglycan biosynthesis. Cell wall formation. This chain is D-alanine--D-alanine ligase, found in Leptospira borgpetersenii serovar Hardjo-bovis (strain JB197).